The following is a 312-amino-acid chain: Holliday junction branch migration complex subunit RuvB (312 aa).

The tract at residues 1–168 (MKTNNEFRPQ…FGHVFYLSEY (168 aa)) is large ATPase domain (RuvB-L). ATP-binding positions include R8, G49, K52, T53, T54, 115–117 (EDF), R158, Y168, and R206. A Mg(2+)-binding site is contributed by T53. The interval 169–234 (ETSEIAAIIL…NIKNIFEKIQ (66 aa)) is small ATPAse domain (RuvB-S). Positions 237–312 (DFGLEEQDIN…EFLKNNQLIK (76 aa)) are head domain (RuvB-H). 2 residues coordinate DNA: K290 and R295.

The protein belongs to the RuvB family. Homohexamer. Forms an RuvA(8)-RuvB(12)-Holliday junction (HJ) complex. HJ DNA is sandwiched between 2 RuvA tetramers; dsDNA enters through RuvA and exits via RuvB. An RuvB hexamer assembles on each DNA strand where it exits the tetramer. Each RuvB hexamer is contacted by two RuvA subunits (via domain III) on 2 adjacent RuvB subunits; this complex drives branch migration. In the full resolvosome a probable DNA-RuvA(4)-RuvB(12)-RuvC(2) complex forms which resolves the HJ.

It is found in the cytoplasm. The enzyme catalyses ATP + H2O = ADP + phosphate + H(+). The RuvA-RuvB-RuvC complex processes Holliday junction (HJ) DNA during genetic recombination and DNA repair, while the RuvA-RuvB complex plays an important role in the rescue of blocked DNA replication forks via replication fork reversal (RFR). RuvA specifically binds to HJ cruciform DNA, conferring on it an open structure. The RuvB hexamer acts as an ATP-dependent pump, pulling dsDNA into and through the RuvAB complex. RuvB forms 2 homohexamers on either side of HJ DNA bound by 1 or 2 RuvA tetramers; 4 subunits per hexamer contact DNA at a time. Coordinated motions by a converter formed by DNA-disengaged RuvB subunits stimulates ATP hydrolysis and nucleotide exchange. Immobilization of the converter enables RuvB to convert the ATP-contained energy into a lever motion, pulling 2 nucleotides of DNA out of the RuvA tetramer per ATP hydrolyzed, thus driving DNA branch migration. The RuvB motors rotate together with the DNA substrate, which together with the progressing nucleotide cycle form the mechanistic basis for DNA recombination by continuous HJ branch migration. Branch migration allows RuvC to scan DNA until it finds its consensus sequence, where it cleaves and resolves cruciform DNA. This Ureaplasma urealyticum serovar 10 (strain ATCC 33699 / Western) protein is Holliday junction branch migration complex subunit RuvB.